Consider the following 116-residue polypeptide: Cysteine proteinase inhibitor 1 (116 aa).

The signal sequence occupies residues 1-26 (MVPKPLSLLLFLLLALSAAVVGGRKL). The Cystatin domain occupies 30–89 (GGWRPIESLNSAEVQDVAQFAVSEHNKQANDELQYQSVVRGYTQVVAGTNYRLVIAAKDG). A Secondary area of contact motif is present at residues 73–77 (QVVAG). N-linked (GlcNAc...) asparagine glycosylation occurs at asparagine 109.

The protein belongs to the cystatin family. Phytocystatin subfamily. Post-translationally, glycosylated.

The protein localises to the secreted. Its function is as follows. Specific inhibitor of papain family cysteine proteinases. Inhibits papain, chymopapain, bromelain, ficin, human cathepsins B, H and L, actinidain and house dustmite endopeptidase 1, but does not inhibit human bleomycin hydrolase. Inhibits papain with an IC(50) of 2.47 nM. Does not inhibit cysteine proteinases belonging to other families including clostripain, streptopain and calpain. This Actinidia deliciosa (Kiwi) protein is Cysteine proteinase inhibitor 1.